The primary structure comprises 414 residues: Secernin-1 (414 aa).

Belongs to the peptidase C69 family. Secernin subfamily.

The protein localises to the cytoplasm. Its function is as follows. Regulates exocytosis in mast cells. Increases both the extent of secretion and the sensitivity of mast cells to stimulation with calcium. This Mus musculus (Mouse) protein is Secernin-1 (Scrn1).